We begin with the raw amino-acid sequence, 440 residues long: GTPase Der (440 aa).

EngA-type G domains lie at 5-167 and 178-353; these read ATVA…PEQE and IMLS…KEHS. GTP-binding positions include 11-18, 58-62, 120-123, 184-191, 231-235, and 296-299; these read GRPNVGKS, DTGGI, NKSE, DTAGL, and NKWD. The region spanning 354-438 is the KH-like domain; the sequence is KRITTADVNR…PIRILERVKQ (85 aa).

Belongs to the TRAFAC class TrmE-Era-EngA-EngB-Septin-like GTPase superfamily. EngA (Der) GTPase family. Associates with the 50S ribosomal subunit.

Its function is as follows. GTPase that plays an essential role in the late steps of ribosome biogenesis. The polypeptide is GTPase Der (Natranaerobius thermophilus (strain ATCC BAA-1301 / DSM 18059 / JW/NM-WN-LF)).